A 670-amino-acid chain; its full sequence is Solute carrier organic anion transporter family member 1A3 (670 aa).

The Cytoplasmic segment spans residues 1-20; the sequence is MGDLEKGAATHGAGCFAKIK. The chain crosses the membrane as a helical span at residues 21 to 40; it reads VFLMALTCAYVSKSLSGTFM. The Extracellular segment spans residues 41–59; it reads SSMLTQIERQFGIPTAIVG. The helical transmembrane segment at 60 to 80 threads the bilayer; it reads FINGSFEIGNLLLIIFVSYFG. The Cytoplasmic segment spans residues 81-86; the sequence is MKLHRP. Residues 87–111 traverse the membrane as a helical segment; it reads IVIGVGCAVMGLGCFIISLPHFLMG. The Extracellular segment spans residues 112 to 155; that stretch reads RYEYETTILPTSNLSSNSFLCMENQTQTLNPAQDPAECVKEVKS. N124 and N135 each carry an N-linked (GlcNAc...) asparagine glycan. Residues 156-184 traverse the membrane as a helical segment; the sequence is LMWIYVLVGNIIRGIGETPIMPLGVSYIE. Residues 185-203 are Cytoplasmic-facing; that stretch reads NFAKSENSPLYIGILETGK. The helical transmembrane segment at 204–224 threads the bilayer; sequence MIGPIFGLLLGSFCASIYVDT. Over 225–242 the chain is Extracellular; sequence GSVNTDDLTITPTDIRWV. The helical transmembrane segment at 243–267 threads the bilayer; it reads GAWWIGFLVCAGVNILISIPFFFFP. Residues 268–311 are Cytoplasmic-facing; that stretch reads KTLPKEGLQENVDGTENAKEESTEKRPRKKNRGITKDFFPFLKS. The tract at residues 277-296 is disordered; that stretch reads ENVDGTENAKEESTEKRPRK. A compositionally biased stretch (basic and acidic residues) spans 283–292; it reads ENAKEESTEK. The chain crosses the membrane as a helical span at residues 312 to 333; it reads PVLQPDLHAVHPYKVLQVNAFN. Residues 334-353 lie on the Extracellular side of the membrane; the sequence is IYFSFLPKYLENQYGKSTAE. Residues 354–377 traverse the membrane as a helical segment; the sequence is VIFLMGVYNLPAICIGYLIAGFMM. Residues 378–381 are Cytoplasmic-facing; it reads KKFK. Residues 382-405 traverse the membrane as a helical segment; that stretch reads ITVKTAAFLAFCLSLSEYSFGFCN. At 406-513 the chain is on the extracellular side; sequence FLITCDNVPV…PECTNKLQYL (108 aa). The 56-residue stretch at 433-488 folds into the Kazal-like domain; the sequence is NNVLADCNTRCSCLTKTWDPVCGDNGLAYMSACLAGCEKSVGTGTNMVFHNCSCIQ. 3 cysteine pairs are disulfide-bonded: C439–C469, C445–C465, and C454–C486. N-linked (GlcNAc...) asparagine glycans are attached at residues N483 and N492. Residues 514-536 traverse the membrane as a helical segment; the sequence is LILSGFLSILYSFAAIPGYMVFL. Residues 537 to 545 are Cytoplasmic-facing; it reads RCIKSEEKS. A helical membrane pass occupies residues 546 to 571; it reads LGIGIHAFCIRVFAGIPAPIYFGALI. Topologically, residues 572-605 are extracellular; that stretch reads DRTCLHWGTQKCGAPGACRMYDINSFRRIYLGMS. Residues 606-623 traverse the membrane as a helical segment; it reads AALRGSSYLPAFVIVILT. Topologically, residues 624 to 670 are cytoplasmic; that stretch reads RKFSLPGKINSSEMEIAEMKLTEKESQCTDVHRNPKFKNDGELKTKL.

The protein belongs to the organo anion transporter (TC 2.A.60) family. As to expression, all isoforms are detected in kidney, and many are kidney specific. Isoforms 2 and 13 are also detected in liver. Isoforms 4 and 9/K4 are ubiquitous, but isoform 9/K13 is kidney specific. Isoforms 5 and 14 are detected in all tissues tested, with the exception of pancreas and spleen. Isoforms 11 and 15 are detected in kidney, pancreas and testis. Isoform 7 is detected in kidney, liver, testis and spleen.

It localises to the cell membrane. Functionally, mediates the Na(+)-independent transport of organic anions such as methotrexate, taurocholate, folate and prostaglandin E2. May contribute to renal secretion and/or reabsorption of hydrophobic anionic compounds. Mediates renal clearance of methotrexate from the blood. The chain is Solute carrier organic anion transporter family member 1A3 (Slco1a3) from Rattus norvegicus (Rat).